A 449-amino-acid polypeptide reads, in one-letter code: Amidophosphoribosyltransferase (449 aa).

The propeptide occupies 1-9 (MRGEIMKEK). Cys-10 acts as the Nucleophile in catalysis. The Glutamine amidotransferase type-2 domain maps to 10 to 224 (CGIFGAYSQD…PGEVIVVKDG (215 aa)). Residue Cys-239 coordinates [4Fe-4S] cluster. Residues Ser-286, Asp-346, and Asp-347 each coordinate Mg(2+). The [4Fe-4S] cluster site is built by Cys-383, Cys-432, and Cys-435.

In the C-terminal section; belongs to the purine/pyrimidine phosphoribosyltransferase family. Mg(2+) is required as a cofactor. It depends on [4Fe-4S] cluster as a cofactor.

It carries out the reaction 5-phospho-beta-D-ribosylamine + L-glutamate + diphosphate = 5-phospho-alpha-D-ribose 1-diphosphate + L-glutamine + H2O. The protein operates within purine metabolism; IMP biosynthesis via de novo pathway; N(1)-(5-phospho-D-ribosyl)glycinamide from 5-phospho-alpha-D-ribose 1-diphosphate: step 1/2. Its function is as follows. Catalyzes the formation of phosphoribosylamine from phosphoribosylpyrophosphate (PRPP) and glutamine. The protein is Amidophosphoribosyltransferase of Pyrococcus horikoshii (strain ATCC 700860 / DSM 12428 / JCM 9974 / NBRC 100139 / OT-3).